The following is a 395-amino-acid chain: Chaperone protein DnaJ 2 (395 aa).

Residues 10–75 form the J domain; sequence DYYADLGVSK…TKRREYDDLK (66 aa). The CR-type zinc-finger motif lies at 165 to 242; the sequence is GTTIPVELTG…CRGRGTVRRT (78 aa). Residues cysteine 178, cysteine 181, cysteine 194, cysteine 197, cysteine 216, cysteine 219, cysteine 230, and cysteine 233 each contribute to the Zn(2+) site. 4 CXXCXGXG motif repeats span residues 178–185, 194–201, 216–223, and 230–237; these read CNTCHGSG, CGQCNGSG, CTNCGGTG, and CVDCRGRG.

Belongs to the DnaJ family. In terms of assembly, homodimer. Zn(2+) serves as cofactor.

Its subcellular location is the cytoplasm. Its function is as follows. Participates actively in the response to hyperosmotic and heat shock by preventing the aggregation of stress-denatured proteins and by disaggregating proteins, also in an autonomous, DnaK-independent fashion. Unfolded proteins bind initially to DnaJ; upon interaction with the DnaJ-bound protein, DnaK hydrolyzes its bound ATP, resulting in the formation of a stable complex. GrpE releases ADP from DnaK; ATP binding to DnaK triggers the release of the substrate protein, thus completing the reaction cycle. Several rounds of ATP-dependent interactions between DnaJ, DnaK and GrpE are required for fully efficient folding. Also involved, together with DnaK and GrpE, in the DNA replication of plasmids through activation of initiation proteins. The polypeptide is Chaperone protein DnaJ 2 (Corynebacterium efficiens (strain DSM 44549 / YS-314 / AJ 12310 / JCM 11189 / NBRC 100395)).